The chain runs to 307 residues: Putative serpin A13 (307 aa).

Residues 1–21 form the signal peptide; sequence MEASRWWLLVTVLMAGAHCVA. Asn150 and Asn250 each carry an N-linked (GlcNAc...) asparagine glycan.

The protein belongs to the serpin family.

The protein resides in the secreted. In Homo sapiens (Human), this protein is Putative serpin A13 (SERPINA13P).